Here is a 225-residue protein sequence, read N- to C-terminus: NAD(P)H-quinone oxidoreductase subunit K, chloroplastic (225 aa).

Positions 43, 44, 108, and 139 each coordinate [4Fe-4S] cluster.

Belongs to the complex I 20 kDa subunit family. In terms of assembly, NDH is composed of at least 16 different subunits, 5 of which are encoded in the nucleus. The cofactor is [4Fe-4S] cluster.

The protein localises to the plastid. It localises to the chloroplast thylakoid membrane. The enzyme catalyses a plastoquinone + NADH + (n+1) H(+)(in) = a plastoquinol + NAD(+) + n H(+)(out). The catalysed reaction is a plastoquinone + NADPH + (n+1) H(+)(in) = a plastoquinol + NADP(+) + n H(+)(out). In terms of biological role, NDH shuttles electrons from NAD(P)H:plastoquinone, via FMN and iron-sulfur (Fe-S) centers, to quinones in the photosynthetic chain and possibly in a chloroplast respiratory chain. The immediate electron acceptor for the enzyme in this species is believed to be plastoquinone. Couples the redox reaction to proton translocation, and thus conserves the redox energy in a proton gradient. The chain is NAD(P)H-quinone oxidoreductase subunit K, chloroplastic from Oryza nivara (Indian wild rice).